The chain runs to 500 residues: tRNA nucleotidyltransferase cca1 (500 aa).

A flexible loop region spans residues 122-139 (DYTNSNSSNKLVFGTPLE). The short motif at 231-241 (ERIGVEVDKML) is the ERhxxExxxhh motif element.

Belongs to the tRNA nucleotidyltransferase/poly(A) polymerase family.

The catalysed reaction is a tRNA precursor + 2 CTP = a tRNA with a 3' CC end + 2 diphosphate. In terms of biological role, tRNA nucleotidyltransferase involved in the synthesis of the tRNA CCA terminus. In contrast to what is usually observed in eukaryotes for which one enzyme synthesizes the whole tRNA CCA terminus, in S.pombe, cca1 specifically adds two cytidine residues to a tRNA substrate lacking this sequence while cca2 specifically adds the terminal adenosine residue thereby completing the CCA sequence. This is tRNA nucleotidyltransferase cca1 from Schizosaccharomyces pombe (strain 972 / ATCC 24843) (Fission yeast).